Reading from the N-terminus, the 547-residue chain is MTKYIFVTGGVVSSVGKGIGVASIGRLLKSRGFSVSVMKLDPYLNVDPGTMSPYQHGEVFVTADGAETDLDLGHYERFIDVNLSRLSNVTTGQIYSAVIAKERRGDYLGGTIQVIPHITNEIKARIGSLARSSQADVVIVEIGGTVGDIESLPFLEAIRQMRKDVGRDNILYIHVTLLPHISTGELKTKPTQHSVMALRNVGISADVILCRADRPIDDDIREKIAFFADVDVRAVIPVPTVDSIYEVPLVLEDMGLGDYLVERLGLPATPPDLEDWRSLVARIRQEKRRLPIALVGKYVELHDAYISVVEALHHAAIEQLIDVDIRWIAAEDVEREGPARLLSGVYGILVPGGFGERGIEGKIASADYARVNGIPYLGLCLGMQCATIAFARHVLGTHDVNSTEFNPQTAHPVIDLMPDQRDITEKGGTMRLGLYPCDLVPGTRAHAAYGCDRVEERHRHRFEFNNRYRAVLESAGLVISGLSPDRQLVEIIELRDHPWYVASQFHPEFQSRPGKPHPLFRGFIAAAAQTLLAGEARQLPLVESASS.

The tract at residues 1–266 (MTKYIFVTGG…GDYLVERLGL (266 aa)) is amidoligase domain. Ser13 lines the CTP pocket. Ser13 serves as a coordination point for UTP. 14–19 (SVGKGI) provides a ligand contact to ATP. Residue Tyr54 participates in L-glutamine binding. Position 71 (Asp71) interacts with ATP. Mg(2+) is bound by residues Asp71 and Glu141. Residues 148-150 (DIE), 187-192 (KTKPTQ), and Lys223 contribute to the CTP site. UTP is bound by residues 187–192 (KTKPTQ) and Lys223. The Glutamine amidotransferase type-1 domain maps to 291–533 (PIALVGKYVE…IAAAAQTLLA (243 aa)). L-glutamine is bound at residue Gly353. Cys380 functions as the Nucleophile; for glutamine hydrolysis in the catalytic mechanism. L-glutamine-binding positions include 381 to 384 (LGMQ), Glu404, and Arg461. Catalysis depends on residues His506 and Glu508.

This sequence belongs to the CTP synthase family. In terms of assembly, homotetramer.

It catalyses the reaction UTP + L-glutamine + ATP + H2O = CTP + L-glutamate + ADP + phosphate + 2 H(+). The catalysed reaction is L-glutamine + H2O = L-glutamate + NH4(+). It carries out the reaction UTP + NH4(+) + ATP = CTP + ADP + phosphate + 2 H(+). The protein operates within pyrimidine metabolism; CTP biosynthesis via de novo pathway; CTP from UDP: step 2/2. With respect to regulation, allosterically activated by GTP, when glutamine is the substrate; GTP has no effect on the reaction when ammonia is the substrate. The allosteric effector GTP functions by stabilizing the protein conformation that binds the tetrahedral intermediate(s) formed during glutamine hydrolysis. Inhibited by the product CTP, via allosteric rather than competitive inhibition. Catalyzes the ATP-dependent amination of UTP to CTP with either L-glutamine or ammonia as the source of nitrogen. Regulates intracellular CTP levels through interactions with the four ribonucleotide triphosphates. This is CTP synthase from Chloroflexus aggregans (strain MD-66 / DSM 9485).